We begin with the raw amino-acid sequence, 546 residues long: Carboxylic ester hydrolase FVEG_12634 (546 aa).

Residues F72 to S91 form a disordered region. The Acyl-ester intermediate role is filled by S214.

This sequence belongs to the type-B carboxylesterase/lipase family.

The enzyme catalyses a carboxylic ester + H2O = an alcohol + a carboxylate + H(+). In terms of biological role, carboxylic ester hydrolase; part of the Fusarium detoxification of benzoxazolinone cluster 2 (FDB2) involved in the degradation of benzoxazolinones produced by the host plant. Maize, wheat, and rye produce the 2 benzoxazinone phytoanticipins 2,4-dihy-droxy-7-methoxy-1,4-benzoxazin-3-one (DIMBOA) and 2,4-dihydroxy-1,4-benzoxazin-3-one (DIBOA) that, due to their inherent instability once released, spontaneously degrade to the more stable corresponding benzoxazolinones, 6-methoxy-2-benzoxazolinone (MBOA) and 2-benzoxazolinone (BOA), respectively. The first step in the detoxification of benzoxazolinones involves the hydrolysis of the cyclic ester bond of benzoxazolinones by the FDB1 cluster gamma-lactamase MBL1 to aminophenols. MBL1 is able to convert BOA into 2-aminophenol (2-AP), as well as MBOA into 5-methoxy-2-aminophenol (2-AMP). The FDB2 cluster N-malonyltransferase FDB2/NAT1 then metabolizes aminophenols via N-malonylation to non-toxic malonamic acids. FDB2/NAT1 converts 2-AP into N-(2-hydroxyphenyl) malonamic acid (HPMA) and 2-AMP into N-(2-hydroxy-4-methoxyphenyl) malonamic acid (HMPMA). The duplicated dienlactone hydrolases DLH1 and DLH2 may provide redundant function for hydrolyzing the lactone moiety in the BOA molecule. The roles of the amidases an other enzymes encoded by the 2 FDB clusters have not been identified so far. This is Carboxylic ester hydrolase FVEG_12634 from Gibberella moniliformis (strain M3125 / FGSC 7600) (Maize ear and stalk rot fungus).